A 94-amino-acid polypeptide reads, in one-letter code: Co-chaperonin GroES (94 aa).

This sequence belongs to the GroES chaperonin family. Heptamer of 7 subunits arranged in a ring. Interacts with the chaperonin GroEL.

It localises to the cytoplasm. Its function is as follows. Together with the chaperonin GroEL, plays an essential role in assisting protein folding. The GroEL-GroES system forms a nano-cage that allows encapsulation of the non-native substrate proteins and provides a physical environment optimized to promote and accelerate protein folding. GroES binds to the apical surface of the GroEL ring, thereby capping the opening of the GroEL channel. The sequence is that of Co-chaperonin GroES from Parageobacillus thermoglucosidasius (Geobacillus thermoglucosidasius).